The following is a 627-amino-acid chain: MITSELSDFLEINEKNSVLRGISASDKILSSGICQLLFSENGHWRIPNGGTAVALFLKNSTERYYRIIVMEPSADPDWEPTVQFDFLIRDKKFETMQEHARLLVFEAESRYIGLNFYDSKECENFHNSVCKRQTRSTDKAKQPALEGKTKKKSSFFHDPFKSHREPRKQVEIEAPTDFRHVDGVKLTDVQEDLYMQVNNPEEEEIVKQLIVRNEDHIRQSLMVKKESQTVKEVKDKNKDKVKTSKSFFGRNKPKVEDVSQPIVPVITGDPLNPDWTVTAATSFKHSHTFSADPIKDPSVLLNRSTSVRVRGSLSTPRIPTHRDSYRSATKPDTVPKQTPPPTHNSYVLPHIDERMTRKMILMKNHQNLREEVLPFELEVGNYVSFPNHTHCSEKPIAEAPLRPPVRPAPIVPTSAGLCLVLAASFPTSSTPSRFLNPFPAPLPAESFFGNSKSKIAYFIKPTNEQPQELFQTPVQIEKIFSSTPSSPVSNAAIIDGMKNISLSDSSTSVAQDIAMKVPTPLPRTSKIISASSPLPPSQDEINPLIEMVDQSSSKSETQIPVTECSQSHLNGKGSAAQIQSADFDKVLNQLLSIKVNSEKSKQSADLELLLVSIEKLIQNYLGFHHED.

The WH1 domain maps to 21-136; it reads GISASDKILS…NSVCKRQTRS (116 aa). Positions 310–347 are disordered; the sequence is RGSLSTPRIPTHRDSYRSATKPDTVPKQTPPPTHNSYV.

This is an uncharacterized protein from Caenorhabditis elegans.